Reading from the N-terminus, the 367-residue chain is Lysophosphatidic acid receptor 5 (367 aa).

The Extracellular portion of the chain corresponds to 1 to 25; that stretch reads MQANSSAKSLPTECPDYQPIHHLHL. The N-linked (GlcNAc...) asparagine glycan is linked to N4. The chain crosses the membrane as a helical span at residues 26–46; the sequence is VVYSVVLAAGLPLNALALWVF. Residues 47-54 lie on the Cytoplasmic side of the membrane; it reads LRALRVHS. The helical transmembrane segment at 55–75 threads the bilayer; it reads VVSVYMCNLAASDLLFTLSLP. Residues 76-95 lie on the Extracellular side of the membrane; it reads LRLSYYARHYWPFPDFLCQL. Cysteines 93 and 174 form a disulfide. The helical transmembrane segment at 96 to 116 threads the bilayer; the sequence is AGAVFQMNMYGSCIFLTLINV. Residues 117–135 are Cytoplasmic-facing; the sequence is DRYAAIVHPLRLRHLRRPR. A helical transmembrane segment spans residues 136–156; it reads VARLLCLGVWALILVFAVPTI. The Extracellular segment spans residues 157 to 186; the sequence is LAHQPSSCARDGRNVSLCFESFSDKLWKGS. N170 is a glycosylation site (N-linked (GlcNAc...) asparagine). Residues 187–207 form a helical membrane-spanning segment; that stretch reads LLPLLLLAEALGFLLPLAAVV. Residues 208–238 lie on the Cytoplasmic side of the membrane; sequence YSSGRVFWTLARPDATRSQRRRKTVRLLLAS. The chain crosses the membrane as a helical span at residues 239–259; that stretch reads LVIFLLCFVPYNATLAVYGLL. Topologically, residues 260–275 are extracellular; that stretch reads RGEVVPASSEARKKVR. Residues 276–296 traverse the membrane as a helical segment; that stretch reads GVLMVMVLLAGANCVLDPLVY. At 297–367 the chain is on the cytoplasmic side; the sequence is YFSAEGFRNT…FTPSHEDSSF (71 aa). Residues 332-350 show a composition bias toward low complexity; it reads LTETAHASTLTTTSQGQLQ. Residues 332–367 form a disordered region; sequence LTETAHASTLTTTSQGQLQPSDPRSSFTPSHEDSSF. The segment covering 351–360 has biased composition (polar residues); it reads PSDPRSSFTP.

It belongs to the G-protein coupled receptor 1 family.

It localises to the cell membrane. Receptor for lysophosphatidic acid (LPA), a mediator of diverse cellular activities. The sequence is that of Lysophosphatidic acid receptor 5 (LPAR5) from Bos taurus (Bovine).